The sequence spans 484 residues: ATP-dependent rRNA helicase RRP3 (484 aa).

Polar residues predominate over residues 1–10 (MAIVGSNSVS). Residues 1 to 61 (MAIVGSNSVS…SSQKSKNIVE (61 aa)) form a disordered region. The segment covering 18–54 (RNDARDLAEKIKRNALKKQEQDKKQQLEEESKPESSQ) has biased composition (basic and acidic residues). Positions 71–99 (STFSELKLVPELLEAIQQMKFSKPTPIQS) match the Q motif motif. A Helicase ATP-binding domain is found at 102–273 (IPHALEGKDI…RASLHNPVRV (172 aa)). 115–122 (AQTGSGKT) lines the ATP pocket. Positions 221-224 (DEAD) match the DEAD box motif. Positions 300–444 (YLIHLLNEFV…KDPSPPKAML (145 aa)) constitute a Helicase C-terminal domain. The segment at 460–484 (RQTKEFHEKTRRGRRGKDDKDREEH) is disordered. Over residues 475-484 (GKDDKDREEH) the composition is skewed to basic and acidic residues.

It belongs to the DEAD box helicase family. DDX47/RRP3 subfamily. Interacts with the SSU processome.

It localises to the nucleus. It carries out the reaction ATP + H2O = ADP + phosphate + H(+). Functionally, ATP-dependent rRNA helicase required for pre-ribosomal RNA processing. Involved in the maturation of the 35S-pre-rRNA and to its cleavage to mature 18S rRNA. This is ATP-dependent rRNA helicase RRP3 from Scheffersomyces stipitis (strain ATCC 58785 / CBS 6054 / NBRC 10063 / NRRL Y-11545) (Yeast).